The sequence spans 713 residues: Elongation factor G (713 aa).

The 283-residue stretch at 8-290 (ERYRNFGIMA…GVIQLLPSPV (283 aa)) folds into the tr-type G domain. GTP-binding positions include 17–24 (AHIDAGKT), 88–92 (DTPGH), and 142–145 (NKMD).

Belongs to the TRAFAC class translation factor GTPase superfamily. Classic translation factor GTPase family. EF-G/EF-2 subfamily.

It localises to the cytoplasm. Functionally, catalyzes the GTP-dependent ribosomal translocation step during translation elongation. During this step, the ribosome changes from the pre-translocational (PRE) to the post-translocational (POST) state as the newly formed A-site-bound peptidyl-tRNA and P-site-bound deacylated tRNA move to the P and E sites, respectively. Catalyzes the coordinated movement of the two tRNA molecules, the mRNA and conformational changes in the ribosome. In Stenotrophomonas maltophilia (strain K279a), this protein is Elongation factor G.